Here is a 196-residue protein sequence, read N- to C-terminus: Orotate phosphoribosyltransferase (196 aa).

117-125 (EDVVTTGLS) is a 5-phospho-alpha-D-ribose 1-diphosphate binding site. The orotate site is built by threonine 121 and arginine 149.

It belongs to the purine/pyrimidine phosphoribosyltransferase family. PyrE subfamily. In terms of assembly, homodimer. Mg(2+) serves as cofactor.

It carries out the reaction orotidine 5'-phosphate + diphosphate = orotate + 5-phospho-alpha-D-ribose 1-diphosphate. It functions in the pathway pyrimidine metabolism; UMP biosynthesis via de novo pathway; UMP from orotate: step 1/2. Its function is as follows. Catalyzes the transfer of a ribosyl phosphate group from 5-phosphoribose 1-diphosphate to orotate, leading to the formation of orotidine monophosphate (OMP). The sequence is that of Orotate phosphoribosyltransferase from Rhizorhabdus wittichii (strain DSM 6014 / CCUG 31198 / JCM 15750 / NBRC 105917 / EY 4224 / RW1) (Sphingomonas wittichii).